The following is a 229-amino-acid chain: Heptaprenylglyceryl phosphate synthase (229 aa).

Position 12 (Lys12) interacts with sn-glycerol 1-phosphate. Positions 14 and 40 each coordinate Mg(2+). Sn-glycerol 1-phosphate contacts are provided by residues 159–164, Gly189, and 209–210; these read YLEYSG and GN.

This sequence belongs to the GGGP/HepGP synthase family. Group I subfamily. In terms of assembly, homodimer. The cofactor is Mg(2+).

The catalysed reaction is sn-glycerol 1-phosphate + all-trans-heptaprenyl diphosphate = 3-heptaprenyl-sn-glycero-1-phosphate + diphosphate. It participates in membrane lipid metabolism; glycerophospholipid metabolism. Prenyltransferase that catalyzes in vivo the transfer of the heptaprenyl moiety of heptaprenyl pyrophosphate (HepPP; 35 carbon atoms) to the C3 hydroxyl of sn-glycerol-1-phosphate (G1P), producing heptaprenylglyceryl phosphate (HepGP). This reaction is an ether-bond-formation step in the biosynthesis of archaea-type G1P-based membrane lipids found in Bacillales. This Bacillus anthracis (strain A0248) protein is Heptaprenylglyceryl phosphate synthase.